The primary structure comprises 347 residues: N-acetyl-gamma-glutamyl-phosphate reductase (347 aa).

Cys152 is a catalytic residue.

This sequence belongs to the NAGSA dehydrogenase family. Type 1 subfamily.

The protein resides in the cytoplasm. The enzyme catalyses N-acetyl-L-glutamate 5-semialdehyde + phosphate + NADP(+) = N-acetyl-L-glutamyl 5-phosphate + NADPH + H(+). It functions in the pathway amino-acid biosynthesis; L-arginine biosynthesis; N(2)-acetyl-L-ornithine from L-glutamate: step 3/4. Its function is as follows. Catalyzes the NADPH-dependent reduction of N-acetyl-5-glutamyl phosphate to yield N-acetyl-L-glutamate 5-semialdehyde. The protein is N-acetyl-gamma-glutamyl-phosphate reductase of Neisseria gonorrhoeae (strain NCCP11945).